We begin with the raw amino-acid sequence, 753 residues long: 5-methyltetrahydropteroyltriglutamate--homocysteine methyltransferase (753 aa).

5-methyltetrahydropteroyltri-L-glutamate contacts are provided by residues R17–K20 and K117. Residues I431 to S433 and E484 contribute to the L-homocysteine site. L-methionine is bound by residues I431 to S433 and E484. 5-methyltetrahydropteroyltri-L-glutamate-binding positions include R515–C516 and W561. Residue D599 participates in L-homocysteine binding. D599 is an L-methionine binding site. E605 serves as a coordination point for 5-methyltetrahydropteroyltri-L-glutamate. 3 residues coordinate Zn(2+): H641, C643, and E665. Residue H694 is the Proton donor of the active site. C726 is a Zn(2+) binding site.

This sequence belongs to the vitamin-B12 independent methionine synthase family. It depends on Zn(2+) as a cofactor.

The enzyme catalyses 5-methyltetrahydropteroyltri-L-glutamate + L-homocysteine = tetrahydropteroyltri-L-glutamate + L-methionine. It functions in the pathway amino-acid biosynthesis; L-methionine biosynthesis via de novo pathway; L-methionine from L-homocysteine (MetE route): step 1/1. In terms of biological role, catalyzes the transfer of a methyl group from 5-methyltetrahydrofolate to homocysteine resulting in methionine formation. The polypeptide is 5-methyltetrahydropteroyltriglutamate--homocysteine methyltransferase (Shigella boydii serotype 4 (strain Sb227)).